A 153-amino-acid chain; its full sequence is Antibacterial peptide PMAP-23 (153 aa).

Positions 1–29 are cleaved as a signal peptide; that stretch reads METQRASLCLGRWSLWLLLLGLVVPSASA. At Gln-30 the chain carries Pyrrolidone carboxylic acid. A propeptide spanning residues 30–130 is cleaved from the precursor; the sequence is QALSYREAVL…DITCNQLQSV (101 aa). Residues 61–80 form a disordered region; that stretch reads DQPPKADEDPGTPKPVSFTV. 2 disulfide bridges follow: Cys-85–Cys-96 and Cys-107–Cys-124.

The protein belongs to the cathelicidin family.

Its subcellular location is the secreted. Functionally, exerts antimicrobial activity against both Gram-positive and negative bacteria at concentrations of 2-16 micro molar. Its activity appears to be mediated by its ability to damage bacterial membranes. This Sus scrofa (Pig) protein is Antibacterial peptide PMAP-23 (PMAP23).